Consider the following 216-residue polypeptide: Sperm microtubule inner protein 8 (216 aa).

In terms of assembly, microtubule inner protein component of sperm flagellar doublet microtubules.

It is found in the cytoplasm. Its subcellular location is the cytoskeleton. The protein resides in the flagellum axoneme. Microtubule inner protein (MIP) part of the dynein-decorated doublet microtubules (DMTs) in flagellum axoneme. May serve to reinforce and thus stabilize the microtubule structure in the sperm flagella. The sequence is that of Sperm microtubule inner protein 8 (Spmip8) from Rattus norvegicus (Rat).